The primary structure comprises 83 residues: Small ribosomal subunit protein uS17 (83 aa).

Belongs to the universal ribosomal protein uS17 family. As to quaternary structure, part of the 30S ribosomal subunit.

Its function is as follows. One of the primary rRNA binding proteins, it binds specifically to the 5'-end of 16S ribosomal RNA. This is Small ribosomal subunit protein uS17 from Pseudoalteromonas atlantica (strain T6c / ATCC BAA-1087).